The primary structure comprises 469 residues: MSAVITPADFNDYKVADISLAAWGRRETIIAESEMPALMGLRRKYASEQPLKGAKILGCIHMTIQTAVLIETLVALGAEVRWSSCNIFSTQDQAAASIAAAGIPVFAWKGETEEEYEWCLEQTILKDGQPWDANMILDDGGDLTELLHKKYPQVLDRVHGVTEETTTGVHRLLDMLAKGELKIPAINVNDSVTKSKNDNKYGCRHSLNDAIKRGTDHLLSGKQALVIGYGDVGKGSAQSLRQEGMIVKVSEVDPICAMQACMDGFELVSPFIDGINDGTEASIDKALLGKIDLIVTTTGNVNVCDANMLKALKKRAVVCNIGHFDNEIDTAFMRKNWAWEEVKPQVHKIHRTGAGSFDPQNDDYLILLAEGRLVNLGNATGHPSRIMDGSFANQVLAQIFLFGQKYADLSPAQKAERLTVEVLPKKLDEEVALEMVRGFGGVVTQLTKQQADYIGVTVEGPFKPHAYRY.

The substrate site is built by threonine 63, aspartate 139, and glutamate 164. Residue 165–167 coordinates NAD(+); sequence TTT. Positions 194 and 198 each coordinate substrate. NAD(+)-binding positions include asparagine 199, 228–233, glutamate 251, asparagine 300, 321–323, and asparagine 375; these read GYGDVG and IGH.

It belongs to the adenosylhomocysteinase family. The cofactor is NAD(+).

Its subcellular location is the cytoplasm. The catalysed reaction is S-adenosyl-L-homocysteine + H2O = L-homocysteine + adenosine. Its pathway is amino-acid biosynthesis; L-homocysteine biosynthesis; L-homocysteine from S-adenosyl-L-homocysteine: step 1/1. Its function is as follows. May play a key role in the regulation of the intracellular concentration of adenosylhomocysteine. This is Adenosylhomocysteinase from Pseudomonas fluorescens (strain Pf0-1).